Here is a 561-residue protein sequence, read N- to C-terminus: Magnesium-chelatase 60 kDa subunit (561 aa).

Disordered stretches follow at residues 234-268 and 298-324; these read PLQE…DPLD and RAAS…SRKG. Positions 237-249 are enriched in pro residues; that stretch reads EAPPPPPPPPEPP. Residues 250–265 show a composition bias toward acidic residues; it reads EPNEGENQQDEQDQID. Positions 314-323 are enriched in basic residues; it reads RRGRPLPSRK. The region spanning 379–559 is the VWFA domain; the sequence is VLIFAVDASG…KMADVLGAAL (181 aa).

The protein belongs to the Mg-chelatase subunits D/I family.

The enzyme catalyses protoporphyrin IX + Mg(2+) + ATP + H2O = Mg-protoporphyrin IX + ADP + phosphate + 3 H(+). It functions in the pathway porphyrin-containing compound metabolism; bacteriochlorophyll biosynthesis. In terms of biological role, involved in bacteriochlorophyll biosynthesis; introduces a magnesium ion into protoporphyrin IX to yield Mg-protoporphyrin IX. The polypeptide is Magnesium-chelatase 60 kDa subunit (bchD) (Rhodobacter capsulatus (strain ATCC BAA-309 / NBRC 16581 / SB1003)).